We begin with the raw amino-acid sequence, 229 residues long: Protein-L-isoaspartate O-methyltransferase (229 aa).

Residue Ser74 is part of the active site.

Belongs to the methyltransferase superfamily. L-isoaspartyl/D-aspartyl protein methyltransferase family.

It is found in the cytoplasm. It catalyses the reaction [protein]-L-isoaspartate + S-adenosyl-L-methionine = [protein]-L-isoaspartate alpha-methyl ester + S-adenosyl-L-homocysteine. Catalyzes the methyl esterification of L-isoaspartyl residues in peptides and proteins that result from spontaneous decomposition of normal L-aspartyl and L-asparaginyl residues. It plays a role in the repair and/or degradation of damaged proteins. The chain is Protein-L-isoaspartate O-methyltransferase from Pelotomaculum thermopropionicum (strain DSM 13744 / JCM 10971 / SI).